Reading from the N-terminus, the 487-residue chain is Glutamyl-tRNA(Gln) amidotransferase subunit A (487 aa).

Active-site charge relay system residues include Lys-82 and Ser-157. Ser-181 functions as the Acyl-ester intermediate in the catalytic mechanism.

Belongs to the amidase family. GatA subfamily. Heterotrimer of A, B and C subunits.

It catalyses the reaction L-glutamyl-tRNA(Gln) + L-glutamine + ATP + H2O = L-glutaminyl-tRNA(Gln) + L-glutamate + ADP + phosphate + H(+). Allows the formation of correctly charged Gln-tRNA(Gln) through the transamidation of misacylated Glu-tRNA(Gln) in organisms which lack glutaminyl-tRNA synthetase. The reaction takes place in the presence of glutamine and ATP through an activated gamma-phospho-Glu-tRNA(Gln). The chain is Glutamyl-tRNA(Gln) amidotransferase subunit A from Fusobacterium nucleatum subsp. nucleatum (strain ATCC 25586 / DSM 15643 / BCRC 10681 / CIP 101130 / JCM 8532 / KCTC 2640 / LMG 13131 / VPI 4355).